Reading from the N-terminus, the 360-residue chain is Phospho-N-acetylmuramoyl-pentapeptide-transferase (360 aa).

10 helical membrane passes run 27–47 (IVSL…MIAW), 73–93 (TMGG…WANL), 94–114 (SNPY…VGFV), 132–152 (WKYF…YSIG), 168–188 (VMPQ…VGTS), 199–219 (GLAI…AWAT), 236–256 (ASEL…FLWF), 263–283 (VFMG…IAVL), 288–308 (FLLV…ILQV), and 338–358 (VIVR…ATLK).

The protein belongs to the glycosyltransferase 4 family. MraY subfamily. Mg(2+) is required as a cofactor.

The protein resides in the cell inner membrane. It carries out the reaction UDP-N-acetyl-alpha-D-muramoyl-L-alanyl-gamma-D-glutamyl-meso-2,6-diaminopimeloyl-D-alanyl-D-alanine + di-trans,octa-cis-undecaprenyl phosphate = di-trans,octa-cis-undecaprenyl diphospho-N-acetyl-alpha-D-muramoyl-L-alanyl-D-glutamyl-meso-2,6-diaminopimeloyl-D-alanyl-D-alanine + UMP. It participates in cell wall biogenesis; peptidoglycan biosynthesis. Catalyzes the initial step of the lipid cycle reactions in the biosynthesis of the cell wall peptidoglycan: transfers peptidoglycan precursor phospho-MurNAc-pentapeptide from UDP-MurNAc-pentapeptide onto the lipid carrier undecaprenyl phosphate, yielding undecaprenyl-pyrophosphoryl-MurNAc-pentapeptide, known as lipid I. This is Phospho-N-acetylmuramoyl-pentapeptide-transferase from Pectobacterium atrosepticum (strain SCRI 1043 / ATCC BAA-672) (Erwinia carotovora subsp. atroseptica).